The chain runs to 395 residues: Transmembrane protein 79 (395 aa).

A disordered region spans residues 1–115 (MTEPETLALL…PPTKLEELPE (115 aa)). Topologically, residues 1 to 204 (MTEPETLALL…GREALRAVAS (204 aa)) are cytoplasmic. A helical transmembrane segment spans residues 205–225 (VGAALILFPCLLYGAYAFLPF). Topologically, residues 226-244 (DAPRLPTMSSRLIYTLRCG) are extracellular. The helical transmembrane segment at 245–265 (VFATFPIVLGILVYGLSLLCF) threads the bilayer. The Cytoplasmic segment spans residues 266–290 (AALRPFGEPRREVEIHRQYVAQSVQ). Residues 291–311 (LFILYFFNLAVLSTYLPQDAL) form a helical membrane-spanning segment. Over 312–313 (KL) the chain is Extracellular. The chain crosses the membrane as a helical span at residues 314-334 (LPLLTGLFAISRLIYWLTFAV). Residues 335–343 (GRSFRGFGY) are Cytoplasmic-facing. The chain crosses the membrane as a helical span at residues 344-364 (GLTFLPLLSMLLWNFYYMFVV). Topologically, residues 365-395 (EPERMLTASESRLDYPDHARSASDYRPRSRG) are extracellular.

The protein resides in the lysosome. The protein localises to the golgi apparatus. It is found in the trans-Golgi network. Its subcellular location is the membrane. Its function is as follows. Contributes to the epidermal integrity and skin barrier function. Plays a role in the lamellar granule (LG) secretory system and in the stratum corneum (SC) epithelial cell formation. This Bos taurus (Bovine) protein is Transmembrane protein 79 (TMEM79).